The following is a 489-amino-acid chain: MFDFDGLSNAFSCQTVLCVGDLMLDEFVYGEISRISPEAPAPVIAVQRSEINVGGAGNVARNIAALGARCIFVGLAGEDEAGVRLRTTLSREGLIEPLLISDPARPTTRKVRFVSDHFSTHMLRADWETPAPASGVVEQALIDAILPQLPRADIVLLSDYAKGVLTARVIRDVIDAARGLGKRVIVDPKSANFGIYSGATLLTPNRKEFADATRSRADDQASIAAAAREVMRLVDGEALLVTQSEHGMTLVPREGEVIHVPAHTVKVRDVTGAGDTVVATLAVSLAAGADWETALRTASAAAAVAVGKSGTAVVTLAELRRKILPPAFLAAEEKIAQSTDDLDQRLSAWREQGLRIGFTNGCFDILHPGHVKVLTGARAACDRLVVGLNSDASVTRLKGEGRPIQDERARAEVLAALEAVDLVVIFEEDTPMNLIERIQPNVLVKGGDYSLEQVVGQELVTARGGEVVLIDILRGFSTTSLVKRAGGRA.

The ribokinase stretch occupies residues 1 to 330 (MFDFDGLSNA…RKILPPAFLA (330 aa)). An ATP-binding site is contributed by 205–208 (NRKE). Residue D275 is part of the active site. Residues 358–489 (FTNGCFDILH…SLVKRAGGRA (132 aa)) form a cytidylyltransferase region.

In the N-terminal section; belongs to the carbohydrate kinase PfkB family. The protein in the C-terminal section; belongs to the cytidylyltransferase family. As to quaternary structure, homodimer.

The catalysed reaction is D-glycero-beta-D-manno-heptose 7-phosphate + ATP = D-glycero-beta-D-manno-heptose 1,7-bisphosphate + ADP + H(+). It carries out the reaction D-glycero-beta-D-manno-heptose 1-phosphate + ATP + H(+) = ADP-D-glycero-beta-D-manno-heptose + diphosphate. It participates in nucleotide-sugar biosynthesis; ADP-L-glycero-beta-D-manno-heptose biosynthesis; ADP-L-glycero-beta-D-manno-heptose from D-glycero-beta-D-manno-heptose 7-phosphate: step 1/4. Its pathway is nucleotide-sugar biosynthesis; ADP-L-glycero-beta-D-manno-heptose biosynthesis; ADP-L-glycero-beta-D-manno-heptose from D-glycero-beta-D-manno-heptose 7-phosphate: step 3/4. Catalyzes the phosphorylation of D-glycero-D-manno-heptose 7-phosphate at the C-1 position to selectively form D-glycero-beta-D-manno-heptose-1,7-bisphosphate. Functionally, catalyzes the ADP transfer from ATP to D-glycero-beta-D-manno-heptose 1-phosphate, yielding ADP-D-glycero-beta-D-manno-heptose. The polypeptide is Bifunctional protein HldE (Nitrobacter hamburgensis (strain DSM 10229 / NCIMB 13809 / X14)).